A 100-amino-acid chain; its full sequence is MASGKPKKKNPRLASGRKRVRQDVKINAANTSLRSKYRTAVKNVEKAVVAGDKAKATELFAKMQAVVDTVADKGIFHKNKAARDKSRLSTKVKALAAIAA.

A compositionally biased stretch (basic residues) spans 1–20 (MASGKPKKKNPRLASGRKRV). Positions 1–21 (MASGKPKKKNPRLASGRKRVR) are disordered.

The protein belongs to the bacterial ribosomal protein bS20 family.

Its function is as follows. Binds directly to 16S ribosomal RNA. In Albidiferax ferrireducens (strain ATCC BAA-621 / DSM 15236 / T118) (Rhodoferax ferrireducens), this protein is Small ribosomal subunit protein bS20.